The following is a 358-amino-acid chain: WD repeat-containing protein 53 (358 aa).

WD repeat units follow at residues 8 to 47 (GHSS…GHMQ), 92 to 131 (VNEE…VTRS), 134 to 174 (RHSN…PVWI), 195 to 234 (LNPA…CERE), and 239 to 278 (GHTL…EKLQ). The interval 288-309 (KKAKRAACPTQGGNSRAPGAED) is disordered.

This sequence belongs to the WD repeat WDR53 family.

In Mus musculus (Mouse), this protein is WD repeat-containing protein 53 (Wdr53).